We begin with the raw amino-acid sequence, 372 residues long: Glutamate 5-kinase (372 aa).

Residue Lys-14 participates in ATP binding. 3 residues coordinate substrate: Ser-54, Asp-141, and Asn-153. 173 to 174 (TD) contributes to the ATP binding site. Residues 280 to 358 (RGTLVLDAGA…EAIESILGYS (79 aa)) form the PUA domain.

The protein belongs to the glutamate 5-kinase family.

The protein resides in the cytoplasm. It catalyses the reaction L-glutamate + ATP = L-glutamyl 5-phosphate + ADP. It functions in the pathway amino-acid biosynthesis; L-proline biosynthesis; L-glutamate 5-semialdehyde from L-glutamate: step 1/2. Its function is as follows. Catalyzes the transfer of a phosphate group to glutamate to form L-glutamate 5-phosphate. This chain is Glutamate 5-kinase, found in Pseudomonas putida (strain ATCC 700007 / DSM 6899 / JCM 31910 / BCRC 17059 / LMG 24140 / F1).